The sequence spans 139 residues: Endoribonuclease YbeY (139 aa).

3 residues coordinate Zn(2+): histidine 107, histidine 111, and aspartate 117.

Belongs to the endoribonuclease YbeY family. Requires Zn(2+) as cofactor.

Its subcellular location is the cytoplasm. Single strand-specific metallo-endoribonuclease involved in late-stage 70S ribosome quality control and in maturation of the 3' terminus of the 16S rRNA. The polypeptide is Endoribonuclease YbeY (Bacteroides fragilis (strain ATCC 25285 / DSM 2151 / CCUG 4856 / JCM 11019 / LMG 10263 / NCTC 9343 / Onslow / VPI 2553 / EN-2)).